Here is a 226-residue protein sequence, read N- to C-terminus: Chalcone--flavanone isomerase (226 aa).

Substrate contacts are provided by T51, N116, and S194.

Belongs to the chalcone isomerase family.

It catalyses the reaction a chalcone = a flavanone.. Its pathway is secondary metabolite biosynthesis; flavonoid biosynthesis. In terms of biological role, catalyzes the intramolecular cyclization of bicyclic chalcones into tricyclic (S)-flavanones. Responsible for the isomerization of 4,2',4',6'-tetrahydroxychalcone (also termed chalcone) into naringenin. The chain is Chalcone--flavanone isomerase (CHI) from Canna generalis (Canna lily).